The chain runs to 704 residues: SH3KBP1-binding protein 1 (704 aa).

At alanine 2 the chain carries N-acetylalanine. Residues 19–88 (EVIHLNVGGK…LRTKELDPRG (70 aa)) enclose the BTB domain. The interval 145 to 165 (LVGPQQAGGRPAPVRRSNTMP) is disordered. Threonine 163 carries the phosphothreonine modification. WD repeat units lie at residues 233–280 (RLDW…GGSE), 283–322 (VFHLGVPVEALFFVGNQLIATSHTGRIGVWNAVTKHWQVQ), 324–359 (VQPITSYDAAGSFLLLGCNNGSIYYVDVQKFPLRMK), 428–466 (VHRSPVTKIMLSEKHLISVCADSNHVRTWSVTRFRGMIS), and 548–586 (LECEGSRRLGSRPRRYLLTGQANGSLAMWDLTTAMDGLG). Over residues 611-644 (ASSRGSLPSPSPRTSLTSLHSAFSNTSLSSRRGS) the composition is skewed to low complexity. Positions 611–704 (ASSRGSLPSP…PKTKLNETSF (94 aa)) are disordered. The PXXXPR motif lies at 618 to 623 (PSPSPR). 2 positions are modified to phosphoserine: serine 644 and serine 646. The short motif at 678-683 (PTPAPR) is the PXXXPR element.

Belongs to the KCTD3 family. Monomer. Interacts with CUL3; interaction is direct and forms a 5:5 heterodecamer. Interacts (via PXXXPR motifs) with SH3KBP1 (via SH3 domains). Directly interacts with cathepsin B/CTSB.

Its subcellular location is the lysosome. Inhibits CBL-SH3KBP1 complex mediated down-regulation of EGFR signaling by sequestration of SH3KBP1. Binds to SH3KBP1 and prevents its interaction with CBL and inhibits translocation of SH3KBP1 to EGFR containing vesicles upon EGF stimulation. The protein is SH3KBP1-binding protein 1 (SHKBP1) of Bos taurus (Bovine).